The sequence spans 399 residues: Pre-mycofactocin synthase (399 aa).

The 383-residue stretch at 4 to 386 (ARDIWFETVA…VPEDILVPEG (383 aa)) folds into the FMN hydroxy acid dehydrogenase domain. FMN-binding residues include S111 and Q131. Y133 lines the a 2-oxocarboxylate pocket. An FMN-binding site is contributed by T159. R168 serves as a coordination point for a 2-oxocarboxylate. K257 serves as a coordination point for FMN. Catalysis depends on H281, which acts as the Proton acceptor. Residues 312–316 (DGGIR) and 335–336 (GR) each bind FMN.

This sequence belongs to the FMN-dependent alpha-hydroxy acid dehydrogenase family. The cofactor is FMN.

The catalysed reaction is 3-amino-5-[(4-hydroxyphenyl)methyl]-4,4-dimethyl-2-pyrrolidin-2-one + O2 + H2O = pre-mycofactocin + H2O2 + NH4(+). Its function is as follows. Involved in the biosynthesis of the enzyme cofactor mycofactocin (MFT). Catalyzes the oxidative deamination of AHDP (3-amino-5-[(4-hydroxyphenyl)methyl]-4,4-dimethyl-2-pyrrolidin-2-one), forming an alpha-keto amide moiety on the resulting molecule, which is called pre-mycofactocin (PMFT). This reaction occurs via a 5-[(4-hydroxyphenyl)methyl]-3-imino-4,4-dimethylpyrrolidin-2-one intermediate, which converts to PMFT. The alpha-keto amide moiety is the redox-active center for the redox activity of mycofactocin. Is required for the in vivo ethanol assimilation in M.smegmatis. This is Pre-mycofactocin synthase from Mycolicibacterium smegmatis (strain ATCC 700084 / mc(2)155) (Mycobacterium smegmatis).